A 901-amino-acid chain; its full sequence is Modifier of cell death (901 aa).

2 disordered regions span residues 147–169 (AQKRGRFPPQARSSLSPQKPRAA) and 218–245 (PRKSAPWQEETAANGGPQSTSLIRSPSP). Residues 259-282 (FKCAECGDGFPVMDRLCDHMIKQH) form a C2H2-type zinc finger. 3 disordered regions span residues 494 to 528 (KKEHMDYDEPDPNIPSTSAQALGYNPDDDEGDDVP), 682 to 717 (QERVHQPERRPRRSAAPASPAKPQYRPQPPARSHEE), and 779 to 901 (HKAI…WDDN). Residues 817 to 828 (EAAAKLIQAENE) show a composition bias toward low complexity. Positions 829–840 (MVVEEEEVEEPP) are enriched in acidic residues. The segment covering 846 to 866 (QVPKEKEVEVAEAEKLPEQVK) has biased composition (basic and acidic residues).

Promotes programmed cell death. Its role in programmed cell death may be in conjunction with cell cycle regulatory factor efl-1 and the synthetic multivulva class B proteins dpl-1 and lin-35, and is independent of the ced-1, ced-8 and ced-9 pathways. The protein is Modifier of cell death of Caenorhabditis elegans.